The primary structure comprises 750 residues: Catalase-peroxidase (750 aa).

The tryptophyl-tyrosyl-methioninium (Trp-Tyr) (with M-261) cross-link spans 112–235 (WHSAGTYRIG…LGAAHMGLIY (124 aa)). The active-site Proton acceptor is the histidine 113. The segment at residues 235 to 261 (YVNPEGHNGNPDPVEAASYIRETFGRM) is a cross-link (tryptophyl-tyrosyl-methioninium (Tyr-Met) (with W-112)). Residue histidine 276 participates in heme b binding.

The protein belongs to the peroxidase family. Peroxidase/catalase subfamily. Homodimer or homotetramer. Heme b serves as cofactor. In terms of processing, formation of the three residue Trp-Tyr-Met cross-link is important for the catalase, but not the peroxidase activity of the enzyme.

It catalyses the reaction H2O2 + AH2 = A + 2 H2O. The enzyme catalyses 2 H2O2 = O2 + 2 H2O. Functionally, bifunctional enzyme with both catalase and broad-spectrum peroxidase activity. The sequence is that of Catalase-peroxidase from Christiangramia forsetii (strain DSM 17595 / CGMCC 1.15422 / KT0803) (Gramella forsetii).